Reading from the N-terminus, the 444-residue chain is ATP-dependent protease ATPase subunit HslU (444 aa).

Residues isoleucine 18, 60-65 (GVGKTE), aspartate 257, glutamate 322, and arginine 394 contribute to the ATP site.

Belongs to the ClpX chaperone family. HslU subfamily. In terms of assembly, a double ring-shaped homohexamer of HslV is capped on each side by a ring-shaped HslU homohexamer. The assembly of the HslU/HslV complex is dependent on binding of ATP.

It localises to the cytoplasm. Functionally, ATPase subunit of a proteasome-like degradation complex; this subunit has chaperone activity. The binding of ATP and its subsequent hydrolysis by HslU are essential for unfolding of protein substrates subsequently hydrolyzed by HslV. HslU recognizes the N-terminal part of its protein substrates and unfolds these before they are guided to HslV for hydrolysis. This is ATP-dependent protease ATPase subunit HslU from Psychromonas ingrahamii (strain DSM 17664 / CCUG 51855 / 37).